The chain runs to 468 residues: ATP synthase subunit beta (468 aa).

Position 155–162 (155–162 (GGAGVGKT)) interacts with ATP.

This sequence belongs to the ATPase alpha/beta chains family. In terms of assembly, F-type ATPases have 2 components, CF(1) - the catalytic core - and CF(0) - the membrane proton channel. CF(1) has five subunits: alpha(3), beta(3), gamma(1), delta(1), epsilon(1). CF(0) has three main subunits: a(1), b(2) and c(9-12). The alpha and beta chains form an alternating ring which encloses part of the gamma chain. CF(1) is attached to CF(0) by a central stalk formed by the gamma and epsilon chains, while a peripheral stalk is formed by the delta and b chains.

The protein resides in the cell membrane. The catalysed reaction is ATP + H2O + 4 H(+)(in) = ADP + phosphate + 5 H(+)(out). Functionally, produces ATP from ADP in the presence of a proton gradient across the membrane. The catalytic sites are hosted primarily by the beta subunits. The polypeptide is ATP synthase subunit beta (Streptococcus pyogenes serotype M1).